A 186-amino-acid chain; its full sequence is Nucleoside diphosphate kinase, mitochondrial (186 aa).

The transit peptide at 1–32 directs the protein to the mitochondrion; sequence MGSLFGRVAALRALLCGPRFQCLLVRPSSGGP. ATP contacts are provided by K44, F92, R120, T126, R137, and N147. The Pros-phosphohistidine intermediate role is filled by H150.

Belongs to the NDK family. Homohexamer. Interacts with OPA1. Interacts with CAPN8. The cofactor is Mg(2+). Expressed in the base region of the oxyntic and pyloric mucosae.

It localises to the mitochondrion intermembrane space. The protein localises to the mitochondrion matrix. The catalysed reaction is a 2'-deoxyribonucleoside 5'-diphosphate + ATP = a 2'-deoxyribonucleoside 5'-triphosphate + ADP. The enzyme catalyses a ribonucleoside 5'-diphosphate + ATP = a ribonucleoside 5'-triphosphate + ADP. In terms of biological role, major role in the synthesis of nucleoside triphosphates other than ATP. The ATP gamma phosphate is transferred to the NDP beta phosphate via a ping-pong mechanism, using a phosphorylated active-site intermediate. Through the catalyzed exchange of gamma-phosphate between di- and triphosphonucleosides participates in regulation of intracellular nucleotide homeostasis. Binds to anionic phospholipids, predominantly to cardiolipin; the binding inhibits its phosphotransfer activity. Acts as a mitochondria-specific NDK; its association with cardiolipin-containing mitochondrial inner membrane is coupled to respiration suggesting that ADP locally regenerated in the mitochondrion innermembrane space by its activity is directly taken up via ANT ADP/ATP translocase into the matrix space to stimulate respiratory ATP regeneration. Proposed to increase GTP-loading on dynamin-related GTPase OPA1 in mitochondria. In vitro can induce liposome cross-linking suggesting that it can cross-link inner and outer membranes to form contact sites, and promotes intermembrane migration of anionic phosphoplipids. Promotes the redistribution of cardiolipin between the mitochondrial inner membrane and outer membrane which is implicated in pro-apoptotic signaling. The chain is Nucleoside diphosphate kinase, mitochondrial (Nme4) from Mus musculus (Mouse).